Here is a 71-residue protein sequence, read N- to C-terminus: ATP synthase subunit c 1 (71 aa).

A run of 2 helical transmembrane segments spans residues 4-24 and 46-66; these read FIGA…VGHV and LFVG…IALL.

It belongs to the ATPase C chain family. In terms of assembly, F-type ATPases have 2 components, F(1) - the catalytic core - and F(0) - the membrane proton channel. F(1) has five subunits: alpha(3), beta(3), gamma(1), delta(1), epsilon(1). F(0) has four main subunits: a(1), b(1), b'(1) and c(10-14). The alpha and beta chains form an alternating ring which encloses part of the gamma chain. F(1) is attached to F(0) by a central stalk formed by the gamma and epsilon chains, while a peripheral stalk is formed by the delta, b and b' chains.

It localises to the cell inner membrane. Its function is as follows. F(1)F(0) ATP synthase produces ATP from ADP in the presence of a proton or sodium gradient. F-type ATPases consist of two structural domains, F(1) containing the extramembraneous catalytic core and F(0) containing the membrane proton channel, linked together by a central stalk and a peripheral stalk. During catalysis, ATP synthesis in the catalytic domain of F(1) is coupled via a rotary mechanism of the central stalk subunits to proton translocation. Key component of the F(0) channel; it plays a direct role in translocation across the membrane. A homomeric c-ring of between 10-14 subunits forms the central stalk rotor element with the F(1) delta and epsilon subunits. The polypeptide is ATP synthase subunit c 1 (Cereibacter sphaeroides (strain ATCC 17029 / ATH 2.4.9) (Rhodobacter sphaeroides)).